Here is a 217-residue protein sequence, read N- to C-terminus: Adenylate kinase (217 aa).

10-15 lines the ATP pocket; that stretch reads GAGKGT. The NMP stretch occupies residues 30 to 59; the sequence is STGDILRAAVSEMTPMGVKAKGYMESGALV. Residues threonine 31, arginine 36, 57 to 59, 85 to 88, and glutamine 92 each bind AMP; these read ALV and GFPR. The LID stretch occupies residues 126-163; the sequence is GRRTCRLCGKGYHVVFDPPRVSGRCDECLGELFQRDDD. Position 127 (arginine 127) interacts with ATP. Positions 130, 133, 150, and 153 each coordinate Zn(2+). 2 residues coordinate AMP: arginine 160 and arginine 171. Glycine 199 contacts ATP.

It belongs to the adenylate kinase family. Monomer.

It is found in the cytoplasm. The enzyme catalyses AMP + ATP = 2 ADP. It participates in purine metabolism; AMP biosynthesis via salvage pathway; AMP from ADP: step 1/1. Functionally, catalyzes the reversible transfer of the terminal phosphate group between ATP and AMP. Plays an important role in cellular energy homeostasis and in adenine nucleotide metabolism. The polypeptide is Adenylate kinase (Geotalea uraniireducens (strain Rf4) (Geobacter uraniireducens)).